The following is a 485-amino-acid chain: Glutamate--tRNA ligase (485 aa).

The 'HIGH' region signature appears at 12–22; sequence PSPTGEPHVGT. Positions 253-257 match the 'KMSKS' region motif; that stretch reads KLSKR. Residue K256 coordinates ATP.

The protein belongs to the class-I aminoacyl-tRNA synthetase family. Glutamate--tRNA ligase type 1 subfamily. As to quaternary structure, monomer.

The protein resides in the cytoplasm. The enzyme catalyses tRNA(Glu) + L-glutamate + ATP = L-glutamyl-tRNA(Glu) + AMP + diphosphate. Its function is as follows. Catalyzes the attachment of glutamate to tRNA(Glu) in a two-step reaction: glutamate is first activated by ATP to form Glu-AMP and then transferred to the acceptor end of tRNA(Glu). In Sinorhizobium medicae (strain WSM419) (Ensifer medicae), this protein is Glutamate--tRNA ligase.